A 271-amino-acid chain; its full sequence is GPN-loop GTPase 3 (271 aa).

13 to 18 contacts GTP; that stretch reads GAGKST. Positions 70 to 72 match the Gly-Pro-Asn (GPN)-loop; involved in dimer interface motif; sequence GPN. 173-176 is a GTP binding site; sequence SKVD.

Belongs to the GPN-loop GTPase family. As to quaternary structure, heterodimers with GPN1 or GPN2. Binds to RNA polymerase II (RNAPII).

In terms of biological role, small GTPase required for proper nuclear import of RNA polymerase II and III (RNAPII and RNAPIII). May act at an RNAP assembly step prior to nuclear import. This is GPN-loop GTPase 3 from Eremothecium gossypii (strain ATCC 10895 / CBS 109.51 / FGSC 9923 / NRRL Y-1056) (Yeast).